The primary structure comprises 704 residues: Elongation factor G 1 (704 aa).

Residues 8–291 enclose the tr-type G domain; the sequence is ERYRNIGISA…AVIDYLPSPA (284 aa). Residues 17–24, 88–92, and 142–145 each bind GTP; these read AHIDAGKT, DTPGH, and NKMD.

The protein belongs to the TRAFAC class translation factor GTPase superfamily. Classic translation factor GTPase family. EF-G/EF-2 subfamily.

The protein resides in the cytoplasm. Catalyzes the GTP-dependent ribosomal translocation step during translation elongation. During this step, the ribosome changes from the pre-translocational (PRE) to the post-translocational (POST) state as the newly formed A-site-bound peptidyl-tRNA and P-site-bound deacylated tRNA move to the P and E sites, respectively. Catalyzes the coordinated movement of the two tRNA molecules, the mRNA and conformational changes in the ribosome. This is Elongation factor G 1 from Burkholderia thailandensis (strain ATCC 700388 / DSM 13276 / CCUG 48851 / CIP 106301 / E264).